The sequence spans 291 residues: ATP synthase gamma chain (291 aa).

The protein belongs to the ATPase gamma chain family. As to quaternary structure, F-type ATPases have 2 components, CF(1) - the catalytic core - and CF(0) - the membrane proton channel. CF(1) has five subunits: alpha(3), beta(3), gamma(1), delta(1), epsilon(1). CF(0) has three main subunits: a, b and c.

Its subcellular location is the cell inner membrane. Produces ATP from ADP in the presence of a proton gradient across the membrane. The gamma chain is believed to be important in regulating ATPase activity and the flow of protons through the CF(0) complex. In Methylobacillus flagellatus (strain ATCC 51484 / DSM 6875 / VKM B-1610 / KT), this protein is ATP synthase gamma chain.